Consider the following 85-residue polypeptide: Phosphocarrier protein HPr (85 aa).

Positions 1–85 (MYSKDVEIIA…HLVALIPTLE (85 aa)) constitute an HPr domain. H15 functions as the Pros-phosphohistidine intermediate in the catalytic mechanism.

Belongs to the HPr family.

It is found in the cytoplasm. Its function is as follows. General (non sugar-specific) component of the phosphoenolpyruvate-dependent sugar phosphotransferase system (sugar PTS). This major carbohydrate active-transport system catalyzes the phosphorylation of incoming sugar substrates concomitantly with their translocation across the cell membrane. The phosphoryl group from phosphoenolpyruvate (PEP) is transferred to the phosphoryl carrier protein HPr by enzyme I. Phospho-HPr then transfers it to the PTS EIIA domain. The polypeptide is Phosphocarrier protein HPr (ptsH) (Haemophilus influenzae (strain ATCC 51907 / DSM 11121 / KW20 / Rd)).